We begin with the raw amino-acid sequence, 303 residues long: Glycine--tRNA ligase alpha subunit (303 aa).

The protein belongs to the class-II aminoacyl-tRNA synthetase family. In terms of assembly, tetramer of two alpha and two beta subunits.

The protein resides in the cytoplasm. The enzyme catalyses tRNA(Gly) + glycine + ATP = glycyl-tRNA(Gly) + AMP + diphosphate. The chain is Glycine--tRNA ligase alpha subunit from Bordetella pertussis (strain Tohama I / ATCC BAA-589 / NCTC 13251).